A 245-amino-acid polypeptide reads, in one-letter code: tRNA (guanine-N(1)-)-methyltransferase (245 aa).

Residues Gly-114 and 134 to 139 each bind S-adenosyl-L-methionine; that span reads IGDYIL.

The protein belongs to the RNA methyltransferase TrmD family. As to quaternary structure, homodimer.

It is found in the cytoplasm. The catalysed reaction is guanosine(37) in tRNA + S-adenosyl-L-methionine = N(1)-methylguanosine(37) in tRNA + S-adenosyl-L-homocysteine + H(+). Specifically methylates guanosine-37 in various tRNAs. This chain is tRNA (guanine-N(1)-)-methyltransferase, found in Listeria welshimeri serovar 6b (strain ATCC 35897 / DSM 20650 / CCUG 15529 / CIP 8149 / NCTC 11857 / SLCC 5334 / V8).